The sequence spans 227 residues: Orotidine 5'-phosphate decarboxylase (227 aa).

Residues aspartate 8, lysine 30, 57 to 66 (DLKFHDIPNT), threonine 116, arginine 177, glutamine 186, glycine 206, and arginine 207 each bind substrate. The Proton donor role is filled by lysine 59.

Belongs to the OMP decarboxylase family. Type 1 subfamily. As to quaternary structure, homodimer.

The enzyme catalyses orotidine 5'-phosphate + H(+) = UMP + CO2. It participates in pyrimidine metabolism; UMP biosynthesis via de novo pathway; UMP from orotate: step 2/2. Its function is as follows. Catalyzes the decarboxylation of orotidine 5'-monophosphate (OMP) to uridine 5'-monophosphate (UMP). The chain is Orotidine 5'-phosphate decarboxylase from Acinetobacter baumannii (strain AB307-0294).